The following is a 212-amino-acid chain: MGMKLHGPAMSPAVMRVIATLKEKDLDFELVPVNMQAGDHKKEPFITLNPFGQVPAFEDGDLKLFESRAITQYIAHTYADKGNQLLANDPKKMAIMSVWMEVESQKFDPVASKLTFEIVIKPMLGMVTDDAAVAENEEKLGKVLDVYESRLKDSKYLGGDSFTLADLHHAPAMNYLMGTKVKSLFDSRPHVSAWCADILARPAWSKAIEYKQ.

Residues 1–82 (MGMKLHGPAM…YIAHTYADKG (82 aa)) enclose the GST N-terminal domain. Glutathione contacts are provided by residues serine 11, 12-13 (PA), 40-41 (HK), 53-54 (QV), and 66-67 (ES). In terms of domain architecture, GST C-terminal spans 89–212 (DPKKMAIMSV…AWSKAIEYKQ (124 aa)).

This sequence belongs to the GST superfamily. Phi family.

It carries out the reaction RX + glutathione = an S-substituted glutathione + a halide anion + H(+). In terms of biological role, conjugation of reduced glutathione to a wide number of exogenous and endogenous hydrophobic electrophiles. This is Glutathione S-transferase from Hyoscyamus muticus (Egyptian henbane).